Consider the following 346-residue polypeptide: Uroporphyrinogen decarboxylase (346 aa).

Residues 23-27 (RQAGR), Asp72, Tyr155, Ser209, and His322 each bind substrate.

This sequence belongs to the uroporphyrinogen decarboxylase family. As to quaternary structure, homodimer.

The protein resides in the cytoplasm. It catalyses the reaction uroporphyrinogen III + 4 H(+) = coproporphyrinogen III + 4 CO2. Its pathway is porphyrin-containing compound metabolism; protoporphyrin-IX biosynthesis; coproporphyrinogen-III from 5-aminolevulinate: step 4/4. Catalyzes the decarboxylation of four acetate groups of uroporphyrinogen-III to yield coproporphyrinogen-III. In Anaeromyxobacter dehalogenans (strain 2CP-C), this protein is Uroporphyrinogen decarboxylase.